Consider the following 619-residue polypeptide: Serine/threonine-protein kinase pkn1 (619 aa).

The Protein kinase domain occupies 15-302; the sequence is YRILYRKGQS…SSQNLPQAVL (288 aa). 21 to 29 serves as a coordination point for ATP; that stretch reads KGQSLWSED. E141 acts as the Proton acceptor in catalysis.

This sequence belongs to the protein kinase superfamily. Ser/Thr protein kinase family. In terms of processing, autophosphorylated on serine and threonine residues.

It carries out the reaction L-seryl-[protein] + ATP = O-phospho-L-seryl-[protein] + ADP + H(+). The enzyme catalyses L-threonyl-[protein] + ATP = O-phospho-L-threonyl-[protein] + ADP + H(+). Its function is as follows. Together with the serine/threonine kinase PknD, may play a role in the specific interactions with host proteins during intracellular growth. The sequence is that of Serine/threonine-protein kinase pkn1 (pkn1) from Chlamydia pneumoniae (Chlamydophila pneumoniae).